The chain runs to 227 residues: Ribose-5-phosphate isomerase A (227 aa).

Substrate is bound by residues Thr-26–Thr-29, Asp-82–Asp-85, and Lys-95–Gly-98. The active-site Proton acceptor is Glu-104. Lys-122 is a substrate binding site.

Belongs to the ribose 5-phosphate isomerase family. As to quaternary structure, homodimer.

The catalysed reaction is aldehydo-D-ribose 5-phosphate = D-ribulose 5-phosphate. It functions in the pathway carbohydrate degradation; pentose phosphate pathway; D-ribose 5-phosphate from D-ribulose 5-phosphate (non-oxidative stage): step 1/1. Functionally, catalyzes the reversible conversion of ribose-5-phosphate to ribulose 5-phosphate. This Streptococcus pyogenes serotype M2 (strain MGAS10270) protein is Ribose-5-phosphate isomerase A.